We begin with the raw amino-acid sequence, 229 residues long: Large ribosomal subunit protein uL1 (229 aa).

It belongs to the universal ribosomal protein uL1 family. Part of the 50S ribosomal subunit.

Functionally, binds directly to 23S rRNA. The L1 stalk is quite mobile in the ribosome, and is involved in E site tRNA release. Protein L1 is also a translational repressor protein, it controls the translation of the L11 operon by binding to its mRNA. This is Large ribosomal subunit protein uL1 from Streptococcus suis (strain 98HAH33).